Consider the following 705-residue polypeptide: Polyribonucleotide nucleotidyltransferase (705 aa).

Mg(2+) is bound by residues Asp-492 and Asp-498. The KH domain maps to 559 to 618 (PLMITMKVSPDKIRHIIGPGGKIINKIIDETGVEIDIDDDGSVYILAQDQESGNRAKEII). The S1 motif domain occupies 628–696 (GDIYEGRVKK…ELGRINLSRK (69 aa)).

The protein belongs to the polyribonucleotide nucleotidyltransferase family. Mg(2+) is required as a cofactor.

Its subcellular location is the cytoplasm. The catalysed reaction is RNA(n+1) + phosphate = RNA(n) + a ribonucleoside 5'-diphosphate. Functionally, involved in mRNA degradation. Catalyzes the phosphorolysis of single-stranded polyribonucleotides processively in the 3'- to 5'-direction. In Halothermothrix orenii (strain H 168 / OCM 544 / DSM 9562), this protein is Polyribonucleotide nucleotidyltransferase.